A 122-amino-acid chain; its full sequence is MTKLSRKLQTQKRHRRLRRSVIGDATRPRLSVFRSNNHIYAQVIDDSAQKTICSASTVDKELREKSDKLPSDCNSSSIVGKLLANRAIKKGIKQVIFDRGGNLYHGRVKALADAAREAGLEF.

Over residues Met-1–Arg-19 the composition is skewed to basic residues. The disordered stretch occupies residues Met-1–Val-21.

Belongs to the universal ribosomal protein uL18 family. In terms of assembly, part of the 50S ribosomal subunit; part of the 5S rRNA/L5/L18/L25 subcomplex. Contacts the 5S and 23S rRNAs.

Functionally, this is one of the proteins that bind and probably mediate the attachment of the 5S RNA into the large ribosomal subunit, where it forms part of the central protuberance. This chain is Large ribosomal subunit protein uL18, found in Prochlorococcus marinus (strain MIT 9312).